A 506-amino-acid polypeptide reads, in one-letter code: AAA-ATPase At4g25835 (506 aa).

The N-terminal stretch at 1-20 is a signal peptide; sequence MKEYWTSLASLLGVLAFCQS. 244–251 contributes to the ATP binding site; it reads GPPGTGKS. The tract at residues 462–506 is disordered; sequence GKSRVQNVSLEEQENRAFDSLYAEENGGEEEEIEDNICKSSDDCS. Positions 487–496 are enriched in acidic residues; the sequence is NGGEEEEIED. Residues 497–506 are compositionally biased toward basic and acidic residues; that stretch reads NICKSSDDCS.

The protein belongs to the AAA ATPase family. BCS1 subfamily. Requires Mg(2+) as cofactor.

It catalyses the reaction ATP + H2O = ADP + phosphate + H(+). The sequence is that of AAA-ATPase At4g25835 from Arabidopsis thaliana (Mouse-ear cress).